The chain runs to 103 residues: Small ribosomal subunit protein uS10 (103 aa).

Belongs to the universal ribosomal protein uS10 family. Part of the 30S ribosomal subunit.

Its function is as follows. Involved in the binding of tRNA to the ribosomes. The sequence is that of Small ribosomal subunit protein uS10 from Chlorobaculum tepidum (strain ATCC 49652 / DSM 12025 / NBRC 103806 / TLS) (Chlorobium tepidum).